The sequence spans 207 residues: Claudin-11 (207 aa).

Position 1 (Met1) is a topological domain, cytoplasmic. Residues 2-22 (VATCLQVVGFVTSFVGWIGII) traverse the membrane as a helical segment. Over 23-82 (VTTSTNDWVVTCSYTIPTCRKMDELGSKGLWADCVMATGLHHCKPLVDILILPGYAQACR) the chain is Extracellular. The chain crosses the membrane as a helical span at residues 83 to 103 (ALMIAASVLGLPGILLLLTVL). Residues 104–122 (PCIRMGHEPGVAKYRRAQL) lie on the Cytoplasmic side of the membrane. Residues 123 to 143 (AGVLLILLALCAIVATIWFPV) traverse the membrane as a helical segment. The Extracellular segment spans residues 144–157 (CAHREITIVSFGYS). The chain crosses the membrane as a helical span at residues 158 to 178 (LYAGWIGAVMCLVGGCVIVCC). Topologically, residues 179 to 207 (SGDAQSFGENRFYYSSGSSSPTHAKSAHV) are cytoplasmic. 4 positions are modified to phosphoserine: Ser193, Ser194, Ser197, and Ser198.

The protein belongs to the claudin family. As to quaternary structure, interacts with tetraspanin-3/TSPAN3. Interacts with OCLN.

The protein localises to the cell junction. It is found in the tight junction. Its subcellular location is the cell membrane. Its function is as follows. Plays a major role in tight junction-specific obliteration of the intercellular space, through calcium-independent cell-adhesion activity. The protein is Claudin-11 (Cldn11) of Rattus norvegicus (Rat).